The primary structure comprises 284 residues: VALDDEFEFDSYEVHHQANDTIDAGGNNKKDAKPEQSSIQSNLSKGKDKDVNVGTSGTHTVPRIKAITSKMRMPRSKGVAALNLEHLLEYAPQQIDISNTRATQSQFDTWYEAVRMAYDIGQTEMPTVMNGLMVWCIENGTSPNINGVWVMMDGNEQVEYPLKPIVENAKPTLRQIMAHFSDVAEAYIEMRNKKEPYMPRYGLIRNLRDISLARYAFDFYEVTSRTPVRAREAHIQMKAAALKSAQPRLFGLDGGISTQEENTERHTTEDVSPSMHTLLGGKNM.

Disordered regions lie at residues 16-57 (HQAN…GTSG) and 255-284 (GISTQEENTERHTTEDVSPSMHTLLGGKNM). Over residues 35–44 (EQSSIQSNLS) the composition is skewed to polar residues.

The protein belongs to the potyviridae genome polyprotein family. Genome polyprotein of potyviruses undergoes post-translational proteolytic processing by the main proteinase NIa-pro resulting in the production of at least ten individual proteins. The P1 proteinase and the HC-pro cleave only their respective C-termini autocatalytically. 6K1 is essential for proper proteolytic separation of P3 from CI.

The protein resides in the virion. The enzyme catalyses RNA(n) + a ribonucleoside 5'-triphosphate = RNA(n+1) + diphosphate. Functionally, an RNA-dependent RNA polymerase that plays an essential role in the virus replication. Involved in aphid transmission, cell-to-cell and systemis movement, encapsidation of the viral RNA and in the regulation of viral RNA amplification. This is Genome polyprotein from Capsicum (peppers).